The chain runs to 200 residues: MPPKKAPTTAKKAASGPTHTSYRDMIKDAILNLKERNGSSRQSIKKYVLANNKLAPASQNAFDSQFNKAIKAGVEKGDFIQPKGTSGPVKLAKKQAPAKPAPKKPATTTKTAAPKKTATKKADKAEKAEKPKTKKTNAGVKKPAGRPKANTAKPRKASTAAPAVVDKPKVVSVTKSGRKTTTTAKPTEKATKKTAKNKKA.

The segment covering 1–14 has biased composition (low complexity); the sequence is MPPKKAPTTAKKAA. Disordered stretches follow at residues 1–20 and 78–200; these read MPPKKAPTTAKKAASGPTHT and DFIQ…NKKA. An H15 domain is found at 18–93; sequence THTSYRDMIK…GTSGPVKLAK (76 aa). Over residues 94–116 the composition is skewed to low complexity; that stretch reads KQAPAKPAPKKPATTTKTAAPKK. The span at 120–131 shows a compositional bias: basic and acidic residues; the sequence is KKADKAEKAEKP. Positions 159–185 are enriched in low complexity; the sequence is TAAPAVVDKPKVVSVTKSGRKTTTTAK.

The protein belongs to the histone H1/H5 family.

Its subcellular location is the nucleus. It localises to the chromosome. Functionally, could act as an H1-type linker histone. In Emericella nidulans (strain FGSC A4 / ATCC 38163 / CBS 112.46 / NRRL 194 / M139) (Aspergillus nidulans), this protein is Histone H1 (hhoA).